Reading from the N-terminus, the 416-residue chain is Gap junction alpha-3 protein (416 aa).

The stretch at 2–15 is an intramembrane region; sequence GDWSFLGRLLENAQ. Residues 16-19 are Cytoplasmic-facing; the sequence is EHST. Residues 20-40 form a helical membrane-spanning segment; that stretch reads VIGKVWLTVLFIFRILVLGAA. Residues 41–71 are Extracellular-facing; that stretch reads AEEVWGDEQSDFTCNTQQPGCENVCYDRAFP. 3 disulfides stabilise this stretch: C54–C198, C61–C192, and C65–C187. A helical membrane pass occupies residues 72–92; that stretch reads ISHIRFWALQIIFVSTPTLIY. Topologically, residues 93–158 are cytoplasmic; it reads LGHVLHIVRM…GALLRTYVFN (66 aa). Over residues 110–128 the composition is skewed to basic and acidic residues; it reads EEELLRRDNPQHGRGREPM. Residues 110 to 141 form a disordered region; the sequence is EEELLRRDNPQHGRGREPMRTGSPRDPPLRDD. A helical transmembrane segment spans residues 159 to 179; it reads IIFKTLFEVGFIAGQYFLYGF. The Extracellular portion of the chain corresponds to 180–207; the sequence is QLQPLYRCDRWPCPNTVDCFISRPTEKT. A helical membrane pass occupies residues 208 to 228; that stretch reads IFVIFMLAVACASLVLNMLEI. At 229 to 416 the chain is on the cytoplasmic side; sequence YHLGWKKLKQ…GRARPGDLAI (188 aa). The disordered stretch occupies residues 336 to 416; that stretch reads GAEPQTPASK…GRARPGDLAI (81 aa). A compositionally biased stretch (low complexity) spans 342–353; that stretch reads PASKPSSAASSP.

The protein belongs to the connexin family. Alpha-type (group II) subfamily. A hemichannel or connexon is composed of a hexamer of connexins. A functional gap junction is formed by the apposition of two hemichannels. Forms heteromeric channels with GJA8. In terms of tissue distribution, detected in eye lens (at protein level). Most abundant in lens, but also present in heart and kidney.

The protein localises to the cell membrane. It is found in the cell junction. It localises to the gap junction. Structural component of lens fiber gap junctions. Gap junctions are dodecameric channels that connect the cytoplasm of adjoining cells. They are formed by the docking of two hexameric hemichannels, one from each cell membrane. Small molecules and ions diffuse from one cell to a neighboring cell via the central pore. This is Gap junction alpha-3 protein (Gja3) from Rattus norvegicus (Rat).